The primary structure comprises 162 residues: NADH-quinone oxidoreductase subunit I (162 aa).

4Fe-4S ferredoxin-type domains follow at residues Leu-53–Glu-83 and Thr-93–Asn-122. [4Fe-4S] cluster contacts are provided by Cys-63, Cys-66, Cys-69, Cys-73, Cys-102, Cys-105, Cys-108, and Cys-112.

It belongs to the complex I 23 kDa subunit family. As to quaternary structure, NDH-1 is composed of 14 different subunits. Subunits NuoA, H, J, K, L, M, N constitute the membrane sector of the complex. The cofactor is [4Fe-4S] cluster.

The protein resides in the cell inner membrane. It carries out the reaction a quinone + NADH + 5 H(+)(in) = a quinol + NAD(+) + 4 H(+)(out). Functionally, NDH-1 shuttles electrons from NADH, via FMN and iron-sulfur (Fe-S) centers, to quinones in the respiratory chain. The immediate electron acceptor for the enzyme in this species is believed to be ubiquinone. Couples the redox reaction to proton translocation (for every two electrons transferred, four hydrogen ions are translocated across the cytoplasmic membrane), and thus conserves the redox energy in a proton gradient. The protein is NADH-quinone oxidoreductase subunit I of Erythrobacter litoralis (strain HTCC2594).